We begin with the raw amino-acid sequence, 454 residues long: UDP-N-acetylmuramoylalanine--D-glutamate ligase (454 aa).

119 to 125 (GSNGKTT) is a binding site for ATP.

This sequence belongs to the MurCDEF family.

The protein resides in the cytoplasm. It carries out the reaction UDP-N-acetyl-alpha-D-muramoyl-L-alanine + D-glutamate + ATP = UDP-N-acetyl-alpha-D-muramoyl-L-alanyl-D-glutamate + ADP + phosphate + H(+). It participates in cell wall biogenesis; peptidoglycan biosynthesis. Its function is as follows. Cell wall formation. Catalyzes the addition of glutamate to the nucleotide precursor UDP-N-acetylmuramoyl-L-alanine (UMA). This chain is UDP-N-acetylmuramoylalanine--D-glutamate ligase, found in Latilactobacillus sakei subsp. sakei (strain 23K) (Lactobacillus sakei subsp. sakei).